Here is an 831-residue protein sequence, read N- to C-terminus: Periplasmic nitrate reductase (831 aa).

The tat-type signal signal peptide spans 1 to 38 (MSMARRDFIKQTAAAAAATVAGVPLTGYTQNIVTESEA). The 57-residue stretch at 41–97 (LKWSKAPCRFCGTGCGVNVAVKDNQVVATHGDFNAEVNKGLNCVKGYFLSKIMYGSD) folds into the 4Fe-4S Mo/W bis-MGD-type domain. Cys48, Cys51, Cys55, and Cys83 together coordinate [4Fe-4S] cluster. Residues Lys85, Gln152, Asn177, Cys181, 214-221 (WGSNMAEM), 245-249 (STFEH), 264-266 (QSD), Met375, Gln379, Asn485, 511-512 (SD), Lys534, Asp561, and 721-730 (TGRVLEHWHS) contribute to the Mo-bis(molybdopterin guanine dinucleotide) site. Position 797 (Trp797) interacts with substrate. Asn805 and Lys822 together coordinate Mo-bis(molybdopterin guanine dinucleotide).

The protein belongs to the prokaryotic molybdopterin-containing oxidoreductase family. NasA/NapA/NarB subfamily. In terms of assembly, component of the periplasmic nitrate reductase NapAB complex composed of NapA and NapB. The cofactor is [4Fe-4S] cluster. It depends on Mo-bis(molybdopterin guanine dinucleotide) as a cofactor. In terms of processing, predicted to be exported by the Tat system. The position of the signal peptide cleavage has not been experimentally proven.

The protein resides in the periplasm. The enzyme catalyses 2 Fe(II)-[cytochrome] + nitrate + 2 H(+) = 2 Fe(III)-[cytochrome] + nitrite + H2O. Its function is as follows. Catalytic subunit of the periplasmic nitrate reductase complex NapAB. Receives electrons from NapB and catalyzes the reduction of nitrate to nitrite. This is Periplasmic nitrate reductase from Bordetella parapertussis (strain 12822 / ATCC BAA-587 / NCTC 13253).